Here is a 121-residue protein sequence, read N- to C-terminus: Cytochrome B5-like protein (121 aa).

Residues 1 to 21 (MIAVIGLLLGFLVSALFLIQG) form a helical membrane-spanning segment. Residues 24–49 (RRTNDNQEKKRSSSEPVEDVVRPKSY) form a disordered region. Basic and acidic residues predominate over residues 26 to 36 (TNDNQEKKRSS). A Cytochrome b5 heme-binding domain is found at 46–121 (PKSYSKSEVA…IEDFYIGELH (76 aa)). Residues H81 and H104 each coordinate heme.

It belongs to the cytochrome b5 family.

It is found in the membrane. This is Cytochrome B5-like protein from Arabidopsis thaliana (Mouse-ear cress).